Reading from the N-terminus, the 492-residue chain is Prenylcysteine oxidase 1-like (492 aa).

Residues 1–21 (MAHAARLLAALAALLAAAATG) form the signal peptide. An N-linked (GlcNAc...) asparagine glycan is attached at N340.

The protein belongs to the prenylcysteine oxidase family. FAD serves as cofactor.

It is found in the secreted. In terms of biological role, likely to have oxidoreductase activity. Required in the mevalonate pathway to regulate prenylation and enhances the bactericidal activity of neutrophils. The sequence is that of Prenylcysteine oxidase 1-like (PCYOX1L) from Bos taurus (Bovine).